Reading from the N-terminus, the 1185-residue chain is ELMO domain-containing protein F (1185 aa).

Disordered regions lie at residues 88–133, 176–196, 361–409, 566–628, 642–805, 819–868, 883–989, and 1044–1114; these read QPSP…GNNN, ISTN…NTAE, NNNS…VENE, KSTD…NTKS, ETER…KSSG, LGEK…PYII, DLDF…TQVT, and QKQK…KPVL. Low complexity-rich tracts occupy residues 94-127, 176-194, 361-406, and 587-613; these read STIH…SSPI, ISTN…NNNT, NNNS…NNNV, and PQSQ…SSSS. In terms of domain architecture, ELMO spans 275–488; that stretch reads DRQNVLSFLN…KTRAVLSRIK (214 aa). Polar residues predominate over residues 648-665; the sequence is SLTGSNGITDGGDSNPNS. Residues 688-699 are compositionally biased toward low complexity; it reads SENGSSSSFSFE. Polar residues predominate over residues 721-732; that stretch reads FNSLTGELTMNI. Low complexity-rich tracts occupy residues 733 to 760 and 767 to 780; these read SSSS…PNVS and TTTT…TTTT. Polar residues predominate over residues 781–790; sequence DDQSQQQVPP. A compositionally biased stretch (basic residues) spans 829 to 841; that stretch reads KVKSKKEKKKKSK. 4 stretches are compositionally biased toward low complexity: residues 853–864, 912–974, 1053–1072, and 1096–1109; these read NNSANNSSYNNS, SSSN…QQPQ, DENQ…SSNE, and GRNS…SSLS.

The protein is ELMO domain-containing protein F (elmoF) of Dictyostelium discoideum (Social amoeba).